A 147-amino-acid chain; its full sequence is Lysozyme C-1 (147 aa).

A signal peptide spans 1–18 (MKALIILGFLFLSVAVQG). In terms of domain architecture, C-type lysozyme spans 19–147 (KVFERCELAR…VSSYVEGCTL (129 aa)). 4 cysteine pairs are disulfide-bonded: Cys24/Cys145, Cys48/Cys133, Cys83/Cys99, and Cys95/Cys113. Residues Glu53 and Asp71 contribute to the active site.

It belongs to the glycosyl hydrolase 22 family. Monomer. As to expression, stomach-specific.

The catalysed reaction is Hydrolysis of (1-&gt;4)-beta-linkages between N-acetylmuramic acid and N-acetyl-D-glucosamine residues in a peptidoglycan and between N-acetyl-D-glucosamine residues in chitodextrins.. Functionally, lysozymes have primarily a bacteriolytic function; those in tissues and body fluids are associated with the monocyte-macrophage system and enhance the activity of immunoagents. This is Lysozyme C-1 (LYZ1) from Bos taurus (Bovine).